The chain runs to 155 residues: Ribosome maturation factor RimP (155 aa).

The protein belongs to the RimP family.

Its subcellular location is the cytoplasm. Functionally, required for maturation of 30S ribosomal subunits. The sequence is that of Ribosome maturation factor RimP from Staphylococcus epidermidis (strain ATCC 35984 / DSM 28319 / BCRC 17069 / CCUG 31568 / BM 3577 / RP62A).